The chain runs to 148 residues: uncharacterized protein (148 aa).

Low complexity predominate over residues methionine 1–arginine 17. Disordered regions lie at residues methionine 1–proline 86 and arginine 122–cysteine 148. Residues arginine 38–proline 57 show a composition bias toward basic residues. A compositionally biased stretch (polar residues) spans glutamine 137 to cysteine 148.

It belongs to the Epstein-Barr virus BLLF2 family.

This is an uncharacterized protein from Epstein-Barr virus (strain AG876) (HHV-4).